Here is a 219-residue protein sequence, read N- to C-terminus: uncharacterized protein (219 aa).

Over 1–15 (MLKLTTTSVTFHVLR) the chain is Cytoplasmic. A helical membrane pass occupies residues 16–36 (YFQLGLSVTNLLLASFAIITN). The Vacuolar portion of the chain corresponds to 37 to 41 (YKVDR). Residues 42-62 (ILRLSLAVSIISSVYFGIVRF) form a helical membrane-spanning segment. A topological domain (cytoplasmic) is located at residue L63. A helical membrane pass occupies residues 64 to 84 (PVLLIFVMEIVQTVLWFTAFV). Topologically, residues 85 to 116 (TLASKFGSMSCSSMPRGINFDYSGSCKIAKID) are vacuolar. The helical transmembrane segment at 117–137 (ILPEAVLFILFLATTYASYIT) threads the bilayer. At 138 to 219 (VLSQAKENGS…VIDGSIEHSS (82 aa)) the chain is on the cytoplasmic side. The segment at 176–219 (PLLDLEVQEDARTETESIEDSTDSEDNANIEQEKVIDGSIEHSS) is disordered. Acidic residues predominate over residues 191–203 (ESIEDSTDSEDNA). A compositionally biased stretch (basic and acidic residues) spans 206–219 (EQEKVIDGSIEHSS).

The protein resides in the vacuole membrane. This is an uncharacterized protein from Saccharomyces cerevisiae (strain ATCC 204508 / S288c) (Baker's yeast).